The sequence spans 1698 residues: Protein 4.1 homolog (1698 aa).

A disordered region spans residues 1–31 (MPAEIKPSAPAEPETPTKSKPKSSSSSHGKP). Low complexity predominate over residues 12 to 27 (EPETPTKSKPKSSSSS). The 283-residue stretch at 32 to 314 (ALARVTLLDG…EHHTFFRLMT (283 aa)) folds into the FERM domain. The segment at 317–434 (PVSKSKMFPV…KEEKERKERE (118 aa)) is hydrophilic. Disordered stretches follow at residues 335-361 (GRTQAESTNTPVDRTPPKFNRTLSGAR) and 374-710 (EKEK…SDPT). Residues 374–448 (EKEKVARKSS…EEKKKAEKAA (75 aa)) are compositionally biased toward basic and acidic residues. A compositionally biased stretch (low complexity) spans 449 to 461 (KAALAAGAAAGAA). Phosphoserine is present on residues Ser471, Ser474, and Ser478. The segment covering 499–514 (KDGKDKSGKDKDKEVG) has biased composition (basic and acidic residues). Residues 562-571 (DGNTSPTRKS) show a composition bias toward polar residues. Ser566 carries the post-translational modification Phosphoserine. A compositionally biased stretch (basic and acidic residues) spans 579–589 (YDQDPNSRKSG). A compositionally biased stretch (polar residues) spans 594-603 (EQLSPTSQQK). A compositionally biased stretch (basic and acidic residues) spans 618-627 (ALKETAEKLK). Residues Ser659 and Ser687 each carry the phosphoserine modification. The span at 684–696 (RSYSPTKGPQGYS) shows a compositional bias: polar residues. The residue at position 689 (Thr689) is a Phosphothreonine. Ser697, Ser1398, Ser1401, and Ser1402 each carry phosphoserine. Positions 1286–1698 (GEIVQVDPND…EKIEIQQQTQ (413 aa)) are C-terminal (CTD). Thr1407 is modified (phosphothreonine). The span at 1509–1532 (LGKNAKTEQLEEKTVATTRTHDPN) shows a compositional bias: basic and acidic residues. The tract at residues 1509–1599 (LGKNAKTEQL…SPLFTTSATT (91 aa)) is disordered. Residues 1533–1554 (KQQQRVVTQEVKTTATVTSGDQ) are compositionally biased toward polar residues. Over residues 1561–1571 (VSSTSSGDSGT) the composition is skewed to low complexity. Over residues 1584–1599 (RTDNQKSPLFTTSATT) the composition is skewed to polar residues. Ser1590 is subject to Phosphoserine.

In terms of tissue distribution, at onset of germ band retraction, expression is seen in epidermis, hindgut and foregut. During retraction, expression extends to tracheal branches and salivary glands.

It is found in the cell junction. Its subcellular location is the septate junction. In terms of biological role, an integral component of the septate junction. May play a role in cell-cell interactions that are necessary for proper development. Vital for embryonic development. The protein is Protein 4.1 homolog (cora) of Drosophila melanogaster (Fruit fly).